A 190-amino-acid polypeptide reads, in one-letter code: Crossover junction endodeoxyribonuclease RuvC (190 aa).

Residues aspartate 8, glutamate 67, and aspartate 139 contribute to the active site. Mg(2+) contacts are provided by aspartate 8, glutamate 67, and aspartate 139.

The protein belongs to the RuvC family. Homodimer which binds Holliday junction (HJ) DNA. The HJ becomes 2-fold symmetrical on binding to RuvC with unstacked arms; it has a different conformation from HJ DNA in complex with RuvA. In the full resolvosome a probable DNA-RuvA(4)-RuvB(12)-RuvC(2) complex forms which resolves the HJ. It depends on Mg(2+) as a cofactor.

It is found in the cytoplasm. It catalyses the reaction Endonucleolytic cleavage at a junction such as a reciprocal single-stranded crossover between two homologous DNA duplexes (Holliday junction).. Its function is as follows. The RuvA-RuvB-RuvC complex processes Holliday junction (HJ) DNA during genetic recombination and DNA repair. Endonuclease that resolves HJ intermediates. Cleaves cruciform DNA by making single-stranded nicks across the HJ at symmetrical positions within the homologous arms, yielding a 5'-phosphate and a 3'-hydroxyl group; requires a central core of homology in the junction. The consensus cleavage sequence is 5'-(A/T)TT(C/G)-3'. Cleavage occurs on the 3'-side of the TT dinucleotide at the point of strand exchange. HJ branch migration catalyzed by RuvA-RuvB allows RuvC to scan DNA until it finds its consensus sequence, where it cleaves and resolves the cruciform DNA. The polypeptide is Crossover junction endodeoxyribonuclease RuvC (Haemophilus influenzae (strain ATCC 51907 / DSM 11121 / KW20 / Rd)).